Here is a 274-residue protein sequence, read N- to C-terminus: NH(3)-dependent NAD(+) synthetase (274 aa).

An ATP-binding site is contributed by 46–53 (GISGGQDS). Asp-52 contacts Mg(2+). Arg-140 serves as a coordination point for deamido-NAD(+). Residue Thr-160 coordinates ATP. A Mg(2+)-binding site is contributed by Glu-165. Residues Lys-173 and Asp-180 each contribute to the deamido-NAD(+) site. 2 residues coordinate ATP: Lys-189 and Thr-211. Residue 260-261 (HK) coordinates deamido-NAD(+).

The protein belongs to the NAD synthetase family. Homodimer.

It catalyses the reaction deamido-NAD(+) + NH4(+) + ATP = AMP + diphosphate + NAD(+) + H(+). It functions in the pathway cofactor biosynthesis; NAD(+) biosynthesis; NAD(+) from deamido-NAD(+) (ammonia route): step 1/1. Catalyzes the ATP-dependent amidation of deamido-NAD to form NAD. Uses ammonia as a nitrogen source. The polypeptide is NH(3)-dependent NAD(+) synthetase (Rhodococcus erythropolis (strain PR4 / NBRC 100887)).